A 428-amino-acid polypeptide reads, in one-letter code: FAD-dependent monooxygenase kojA (428 aa).

FAD-binding positions include Arg-52–Pro-60 and Ser-328–Val-329.

The protein belongs to the aromatic-ring hydroxylase family. FAD is required as a cofactor.

Functionally, probable FAD-dependent monooxygenase; part of the gene cluster that mediates the biosynthesis of 5-hydroxy-2-hydroxymethyl-1,4-pyrone, also know as kojic acid, a by-product in the fermentation process of malting rice that acts as a chelation agent. Glucose might be converted to kojic acid by a combination of dehydrogenase and dehydratase reactions involving kojA and probably additional enzymes. The chain is FAD-dependent monooxygenase kojA from Aspergillus flavus (strain ATCC 200026 / FGSC A1120 / IAM 13836 / NRRL 3357 / JCM 12722 / SRRC 167).